The primary structure comprises 425 residues: Glucose-1-phosphate adenylyltransferase (425 aa).

Alpha-D-glucose 1-phosphate contacts are provided by residues Tyr110, Gly175, 190–191, and Ser208; that span reads EK.

The protein belongs to the bacterial/plant glucose-1-phosphate adenylyltransferase family. Homotetramer.

The catalysed reaction is alpha-D-glucose 1-phosphate + ATP + H(+) = ADP-alpha-D-glucose + diphosphate. The protein operates within glycan biosynthesis; glycogen biosynthesis. Its function is as follows. Involved in the biosynthesis of ADP-glucose, a building block required for the elongation reactions to produce glycogen. Catalyzes the reaction between ATP and alpha-D-glucose 1-phosphate (G1P) to produce pyrophosphate and ADP-Glc. In Nitrosospira multiformis (strain ATCC 25196 / NCIMB 11849 / C 71), this protein is Glucose-1-phosphate adenylyltransferase.